The following is a 538-amino-acid chain: Syncytin-2 (538 aa).

The N-terminal stretch at 1–15 is a signal peptide; that stretch reads MGLLLLVLILTPSLA. The Extracellular segment spans residues 16-478; it reads AYRHPDFPLL…GWLNWEGTWK (463 aa). The short motif at 43–46 is the CXXC element; sequence CWLC. Cystine bridges form between cysteine 43–cysteine 46, cysteine 43–cysteine 439, and cysteine 431–cysteine 438. 8 N-linked (GlcNAc...) asparagine glycosylation sites follow: asparagine 133, asparagine 146, asparagine 177, asparagine 220, asparagine 241, asparagine 247, asparagine 312, and asparagine 332. Residues 354–374 form a fusion peptide region; it reads FIPLLAGLGILAGTGTGIAGI. Positions 414–430 match the CKS-17 motif; that stretch reads LQNRRGLDMLTAAQGGI. Positions 431–439 match the CX6CC motif; that stretch reads CLALDEKCC. N-linked (GlcNAc...) asparagine glycosylation occurs at asparagine 443. The helical transmembrane segment at 479 to 499 threads the bilayer; sequence WFSWVLPLTGPLVSLLLLLLF. Residues 500 to 538 lie on the Cytoplasmic side of the membrane; it reads GPCLLNLITQFVSSRLQAIKLQTNLSAGRRPRNIQESPF.

Belongs to the gamma type-C retroviral envelope protein family. HERV class-I FRD env subfamily. The surface and transmembrane proteins form a heterodimer. They are attached by non-covalent interactions or by a labile interchain disulfide bond. In terms of processing, specific enzymatic cleavages in vivo yield the mature SU and TM proteins. The CXXC motif is highly conserved across a broad range of retroviral envelope proteins. It is thought to participate in the formation of a labile disulfide bond possibly with the CX6CC motif present in the transmembrane protein.

Its subcellular location is the virion. The protein localises to the cell membrane. In terms of biological role, this endogenous retroviral envelope protein has retained its original fusogenic properties and participates in trophoblast fusion and the formation of a syncytium during placenta morphogenesis. The interaction with MFSD2A is apparently important for this process. Endogenous envelope proteins may have kept, lost or modified their original function during evolution but this one can still make pseudotypes with MLV, HIV-1 or SIV-1 virions and confer infectivity. Retroviral envelope proteins mediate receptor recognition and membrane fusion during early infection. The surface protein mediates receptor recognition, while the transmembrane protein anchors the envelope heterodimer to the viral membrane through one transmembrane domain. The other hydrophobic domain, called fusion peptide, mediates fusion of the viral membrane with the target cell membrane. The sequence is that of Syncytin-2 (ERVFRD-1) from Gorilla gorilla gorilla (Western lowland gorilla).